Reading from the N-terminus, the 295-residue chain is Cutinase 11 (295 aa).

Positions 1–17 are cleaved as a signal peptide; that stretch reads MQTSALLLAAQALVASA. Residues Cys-25 and Cys-102 are joined by a disulfide bond. Catalysis depends on residues Ser-113, Asp-198, and His-210. An intrachain disulfide couples Cys-184 to Cys-202. The segment at 228–258 is disordered; sequence KLNSGGSPPTTPPTTPPTTPPTTPPTTPPPS. Residues 236–258 show a composition bias toward pro residues; it reads PTTPPTTPPTTPPTTPPTTPPPS. The CBM1 domain maps to 260-295; it reads SCAALYGQCGGQGWNGATCCSQGTCRASNQWYSQCL.

It belongs to the cutinase family. The 2 disulfide bonds play a critical role in holding the catalytic residues in juxta-position; reduction of the disulfide bridges results in the complete inactivation of the enzyme.

It is found in the secreted. The enzyme catalyses cutin + H2O = cutin monomers.. Catalyzes the hydrolysis of complex carboxylic polyesters found in the cell wall of plants. May degrade cutin, a macromolecule that forms the structure of the plant cuticle. May also degrade suberin, a specialized macromolecule found in the cell wall of various plant tissues. Allows pathogenic fungi to penetrate through the cuticular barrier into the host plant during the initial stage of fungal infection. Involved in pathogenesis. The protein is Cutinase 11 of Verticillium dahliae (Verticillium wilt).